The sequence spans 129 residues: Large ribosomal subunit protein uL22 (129 aa).

This sequence belongs to the universal ribosomal protein uL22 family. As to quaternary structure, part of the 50S ribosomal subunit.

In terms of biological role, this protein binds specifically to 23S rRNA; its binding is stimulated by other ribosomal proteins, e.g. L4, L17, and L20. It is important during the early stages of 50S assembly. It makes multiple contacts with different domains of the 23S rRNA in the assembled 50S subunit and ribosome. The globular domain of the protein is located near the polypeptide exit tunnel on the outside of the subunit, while an extended beta-hairpin is found that lines the wall of the exit tunnel in the center of the 70S ribosome. The sequence is that of Large ribosomal subunit protein uL22 from Prochlorococcus marinus (strain MIT 9211).